We begin with the raw amino-acid sequence, 620 residues long: DNA mismatch repair protein MutL (620 aa).

Residues 332-402 (SELGLEAQPE…YRTPLRPATH (71 aa)) are disordered. Residues 352–365 (SNSTNSNVSSTSYS) are compositionally biased toward low complexity. Polar residues predominate over residues 378–394 (PLTTTATSYNQGQSSYR).

It belongs to the DNA mismatch repair MutL/HexB family.

In terms of biological role, this protein is involved in the repair of mismatches in DNA. It is required for dam-dependent methyl-directed DNA mismatch repair. May act as a 'molecular matchmaker', a protein that promotes the formation of a stable complex between two or more DNA-binding proteins in an ATP-dependent manner without itself being part of a final effector complex. In Shewanella piezotolerans (strain WP3 / JCM 13877), this protein is DNA mismatch repair protein MutL.